Consider the following 555-residue polypeptide: CTP synthase (555 aa).

The interval 1–265 is amidoligase domain; the sequence is MTRYIFITGG…GNRVCEKLNI (265 aa). S13 is a CTP binding site. S13 contributes to the UTP binding site. ATP contacts are provided by residues 14-19 and D71; that span reads SLGKGI. 2 residues coordinate Mg(2+): D71 and E139. CTP contacts are provided by residues 146-148, 186-191, and K222; these read DIE and KTKPTQ. UTP is bound by residues 186 to 191 and K222; that span reads KTKPTQ. One can recognise a Glutamine amidotransferase type-1 domain in the interval 290–541; sequence TVAVVGKYVD…IKAGLAAKEA (252 aa). G351 lines the L-glutamine pocket. C378 (nucleophile; for glutamine hydrolysis) is an active-site residue. L-glutamine-binding positions include 379–382, E402, and R469; that span reads LGMQ. Residues H514 and E516 contribute to the active site.

The protein belongs to the CTP synthase family. As to quaternary structure, homotetramer.

It carries out the reaction UTP + L-glutamine + ATP + H2O = CTP + L-glutamate + ADP + phosphate + 2 H(+). The catalysed reaction is L-glutamine + H2O = L-glutamate + NH4(+). It catalyses the reaction UTP + NH4(+) + ATP = CTP + ADP + phosphate + 2 H(+). It participates in pyrimidine metabolism; CTP biosynthesis via de novo pathway; CTP from UDP: step 2/2. Allosterically activated by GTP, when glutamine is the substrate; GTP has no effect on the reaction when ammonia is the substrate. The allosteric effector GTP functions by stabilizing the protein conformation that binds the tetrahedral intermediate(s) formed during glutamine hydrolysis. Inhibited by the product CTP, via allosteric rather than competitive inhibition. Its function is as follows. Catalyzes the ATP-dependent amination of UTP to CTP with either L-glutamine or ammonia as the source of nitrogen. Regulates intracellular CTP levels through interactions with the four ribonucleotide triphosphates. The chain is CTP synthase from Coxiella burnetii (strain RSA 331 / Henzerling II).